Consider the following 333-residue polypeptide: 5-formaminoimidazole-4-carboxamide-1-(beta)-D-ribofuranosyl 5'-monophosphate synthetase (333 aa).

5-amino-1-(5-phospho-beta-D-ribosyl)imidazole-4-carboxamide-binding residues include His9 and Ser73. The ATP-grasp domain occupies 94 to 324 (RNLFEWEANQ…ISREIKLAIN (231 aa)). Residues 124 to 184 (PEDI…VPMY) and Glu206 each bind ATP. Position 230 (Asn230) interacts with 5-amino-1-(5-phospho-beta-D-ribosyl)imidazole-4-carboxamide. The Mg(2+) site is built by Glu269 and Glu282.

This sequence belongs to the phosphohexose mutase family. Mg(2+) is required as a cofactor. Requires Mn(2+) as cofactor.

It catalyses the reaction 5-amino-1-(5-phospho-beta-D-ribosyl)imidazole-4-carboxamide + formate + ATP = 5-formamido-1-(5-phospho-D-ribosyl)imidazole-4-carboxamide + ADP + phosphate. The protein operates within purine metabolism; IMP biosynthesis via de novo pathway; 5-formamido-1-(5-phospho-D-ribosyl)imidazole-4-carboxamide from 5-amino-1-(5-phospho-D-ribosyl)imidazole-4-carboxamide (formate route): step 1/1. Its function is as follows. Catalyzes the ATP- and formate-dependent formylation of 5-aminoimidazole-4-carboxamide-1-beta-d-ribofuranosyl 5'-monophosphate (AICAR) to 5-formaminoimidazole-4-carboxamide-1-beta-d-ribofuranosyl 5'-monophosphate (FAICAR) in the absence of folates. The sequence is that of 5-formaminoimidazole-4-carboxamide-1-(beta)-D-ribofuranosyl 5'-monophosphate synthetase from Sulfurisphaera tokodaii (strain DSM 16993 / JCM 10545 / NBRC 100140 / 7) (Sulfolobus tokodaii).